The chain runs to 127 residues: Fluoride-specific ion channel FluC (127 aa).

3 consecutive transmembrane segments (helical) span residues leucine 28–methionine 48, threonine 73–isoleucine 93, and valine 98–leucine 118. Glycine 77 and threonine 80 together coordinate Na(+).

This sequence belongs to the fluoride channel Fluc/FEX (TC 1.A.43) family.

The protein localises to the cell inner membrane. It catalyses the reaction fluoride(in) = fluoride(out). Na(+) is not transported, but it plays an essential structural role and its presence is essential for fluoride channel function. Functionally, fluoride-specific ion channel. Important for reducing fluoride concentration in the cell, thus reducing its toxicity. This Beijerinckia indica subsp. indica (strain ATCC 9039 / DSM 1715 / NCIMB 8712) protein is Fluoride-specific ion channel FluC.